A 193-amino-acid polypeptide reads, in one-letter code: Xanthine phosphoribosyltransferase (193 aa).

Xanthine-binding residues include L20 and T27. A128–A132 serves as a coordination point for 5-phospho-alpha-D-ribose 1-diphosphate. K156 serves as a coordination point for xanthine.

This sequence belongs to the purine/pyrimidine phosphoribosyltransferase family. Xpt subfamily. Homodimer.

The protein resides in the cytoplasm. It carries out the reaction XMP + diphosphate = xanthine + 5-phospho-alpha-D-ribose 1-diphosphate. The protein operates within purine metabolism; XMP biosynthesis via salvage pathway; XMP from xanthine: step 1/1. Functionally, converts the preformed base xanthine, a product of nucleic acid breakdown, to xanthosine 5'-monophosphate (XMP), so it can be reused for RNA or DNA synthesis. This chain is Xanthine phosphoribosyltransferase, found in Streptococcus pyogenes serotype M5 (strain Manfredo).